A 75-amino-acid chain; its full sequence is Brevinin-2SN2 (75 aa).

The first 22 residues, M1–C22, serve as a signal peptide directing secretion. Positions E23–E40 are cleaved as a propeptide — removed in mature form. Residues C69 and C75 are joined by a disulfide bond.

This sequence belongs to the frog skin active peptide (FSAP) family. Brevinin subfamily. Expressed by the skin glands.

It localises to the secreted. In terms of biological role, antimicrobial peptide. Active against some Gram-negative and a variety of Gram-positive bacterial strains. Active against fungus C.glabrata 090902 but not against C.albicans ATCC 10231. Shows hemolytic activity against human erythrocytes. In Sylvirana spinulosa (Fine-spined frog), this protein is Brevinin-2SN2.